The sequence spans 402 residues: Arginine biosynthesis bifunctional protein ArgJ (402 aa).

Residues threonine 152, lysine 178, threonine 189, glutamate 275, asparagine 397, and threonine 402 each contribute to the substrate site. Threonine 189 serves as the catalytic Nucleophile.

This sequence belongs to the ArgJ family. As to quaternary structure, heterotetramer of two alpha and two beta chains.

The protein localises to the cytoplasm. It carries out the reaction N(2)-acetyl-L-ornithine + L-glutamate = N-acetyl-L-glutamate + L-ornithine. It catalyses the reaction L-glutamate + acetyl-CoA = N-acetyl-L-glutamate + CoA + H(+). Its pathway is amino-acid biosynthesis; L-arginine biosynthesis; L-ornithine and N-acetyl-L-glutamate from L-glutamate and N(2)-acetyl-L-ornithine (cyclic): step 1/1. It participates in amino-acid biosynthesis; L-arginine biosynthesis; N(2)-acetyl-L-ornithine from L-glutamate: step 1/4. Its function is as follows. Catalyzes two activities which are involved in the cyclic version of arginine biosynthesis: the synthesis of N-acetylglutamate from glutamate and acetyl-CoA as the acetyl donor, and of ornithine by transacetylation between N(2)-acetylornithine and glutamate. This chain is Arginine biosynthesis bifunctional protein ArgJ, found in Lactiplantibacillus plantarum (strain ATCC BAA-793 / NCIMB 8826 / WCFS1) (Lactobacillus plantarum).